We begin with the raw amino-acid sequence, 236 residues long: Small ribosomal subunit protein uS3 (236 aa).

The KH type-2 domain occupies 39-107 (VREFLKKKLA…PVHLNIEEVR (69 aa)). The tract at residues 215 to 236 (AAQPAEPEKKVRKSGAKNAATS) is disordered.

This sequence belongs to the universal ribosomal protein uS3 family. Part of the 30S ribosomal subunit. Forms a tight complex with proteins S10 and S14.

Its function is as follows. Binds the lower part of the 30S subunit head. Binds mRNA in the 70S ribosome, positioning it for translation. In Methylobacillus flagellatus (strain ATCC 51484 / DSM 6875 / VKM B-1610 / KT), this protein is Small ribosomal subunit protein uS3.